The following is a 208-amino-acid chain: ATP synthase subunit beta, chloroplastic (208 aa).

This sequence belongs to the ATPase alpha/beta chains family. F-type ATPases have 2 components, CF(1) - the catalytic core - and CF(0) - the membrane proton channel. CF(1) has five subunits: alpha(3), beta(3), gamma(1), delta(1), epsilon(1). CF(0) has four main subunits: a(1), b(1), b'(1) and c(9-12).

The protein localises to the plastid. Its subcellular location is the chloroplast thylakoid membrane. The enzyme catalyses ATP + H2O + 4 H(+)(in) = ADP + phosphate + 5 H(+)(out). In terms of biological role, produces ATP from ADP in the presence of a proton gradient across the membrane. The catalytic sites are hosted primarily by the beta subunits. The protein is ATP synthase subunit beta, chloroplastic (atpB) of Lonchitis hirsuta (Tomato fern).